Reading from the N-terminus, the 914-residue chain is Solute carrier family 12 member 9 (914 aa).

The Cytoplasmic portion of the chain corresponds to 1–36 (MASENSPLLAYRLLGEEGAAFPPNGAGGSGVASARK). S6 bears the Phosphoserine mark. Residues 37–57 (LSTFLGVVVPTVLSMFSIVVF) traverse the membrane as a helical segment. Topologically, residues 58 to 72 (LRIGFVVGHAGLLQA) are extracellular. Residues 73-93 (LAMLLVAYVILALTVLSVCAI) form a helical membrane-spanning segment. Over 94–119 (ATNGAVRGGGAYFMISRTLGPEVGGS) the chain is Cytoplasmic. The helical transmembrane segment at 120–140 (IGLMFYLANVCGCAVSLLGLV) threads the bilayer. Topologically, residues 141–167 (ESILDVFGADVTGSSGIKVLPQGYGWN) are extracellular. The helical transmembrane segment at 168 to 188 (LLYGSLLLGLVGGVCALGAGL) threads the bilayer. Topologically, residues 189 to 193 (YARAS) are cytoplasmic. Residues 194–214 (FLTFLLVSGSLASVLVSFVAV) form a helical membrane-spanning segment. The Extracellular segment spans residues 215–262 (GPRNITLAPRPGTNGSSVPPRHGHFTGFNGSTLKDNLGAGYAEDYTTG). 3 N-linked (GlcNAc...) asparagine glycosylation sites follow: N218, N228, and N243. The helical transmembrane segment at 263-283 (AMMTFASVFAVLFNGCTGIMA) threads the bilayer. The Cytoplasmic portion of the chain corresponds to 284 to 297 (GANMSGELKDPSRA). A helical transmembrane segment spans residues 298 to 318 (IPLGTIIAVAYTFFIYILLFF). Over 319-338 (LSSFTCDRALLQGDYGFFRD) the chain is Extracellular. The chain crosses the membrane as a helical span at residues 339 to 359 (ISLWPPLVLIGIYATALSASM). At 360-376 (SSLIGASRILHALAQDD) the chain is on the cytoplasmic side. The helical transmembrane segment at 377–399 (LFGVILAPAKVVSGGGNPWGAVL) threads the bilayer. Topologically, residues 400–416 (YSWGLVQLVLLAGKLNT) are extracellular. A helical membrane pass occupies residues 417–437 (LAAVVTVFYLVAYAAVDLSCL). Over 438–466 (SLEWASAPNFRPTFSLFSWHTCLLGVASC) the chain is Cytoplasmic. The helical transmembrane segment at 467–487 (LLMMFLISPGAAGGSLLLMGL) threads the bilayer. The Extracellular portion of the chain corresponds to 488–740 (LSALLTARGG…LLRPRGGPGY (253 aa)). The segment at 645 to 678 (PAFSEPAEGTREGGSPALSTLFPPPRAPGSPRAL) is disordered. A helical membrane pass occupies residues 741–761 (VDVCGLFLLQMATILSMVPAW). The Cytoplasmic segment spans residues 762–914 (HSARLRIFLC…GVTPVTCTDL (153 aa)). The interval 843-864 (QQGRGTGGGPGGPEGRDGEEGP) is disordered. Over residues 846 to 855 (RGTGGGPGGP) the composition is skewed to gly residues.

Belongs to the SLC12A transporter family. Interacts with SLC12A1.

The protein localises to the cell membrane. The protein resides in the lysosome membrane. In terms of biological role, may be an inhibitor of SLC12A1. Seems to correspond to a subunit of a multimeric transport system and thus, additional subunits may be required for its function. May play a role in lysosomal ion flux and osmoregulation. The protein is Solute carrier family 12 member 9 (Slc12a9) of Rattus norvegicus (Rat).